Reading from the N-terminus, the 282-residue chain is Probable endonuclease 4 (282 aa).

Zn(2+) is bound by residues His-66, His-106, Glu-143, Asp-177, His-180, His-214, Asp-227, His-229, and Glu-259.

Belongs to the AP endonuclease 2 family. Zn(2+) is required as a cofactor.

It catalyses the reaction Endonucleolytic cleavage to 5'-phosphooligonucleotide end-products.. Endonuclease IV plays a role in DNA repair. It cleaves phosphodiester bonds at apurinic or apyrimidinic (AP) sites, generating a 3'-hydroxyl group and a 5'-terminal sugar phosphate. This is Probable endonuclease 4 from Nitratidesulfovibrio vulgaris (strain DP4) (Desulfovibrio vulgaris).